A 354-amino-acid chain; its full sequence is Dihydroorotate dehydrogenase (quinone) (354 aa).

Residues 67-71 and T91 contribute to the FMN site; that span reads AGFDK. K71 is a binding site for substrate. Position 116-120 (116-120) interacts with substrate; the sequence is NRMGF. FMN-binding residues include N144 and N177. N177 contacts substrate. S180 functions as the Nucleophile in the catalytic mechanism. N182 is a binding site for substrate. The FMN site is built by K213 and T241. 242–243 is a binding site for substrate; the sequence is NT. FMN is bound by residues G265, G294, and 315–316; that span reads YT.

The protein belongs to the dihydroorotate dehydrogenase family. Type 2 subfamily. As to quaternary structure, monomer. FMN serves as cofactor.

It is found in the cell membrane. The enzyme catalyses (S)-dihydroorotate + a quinone = orotate + a quinol. The protein operates within pyrimidine metabolism; UMP biosynthesis via de novo pathway; orotate from (S)-dihydroorotate (quinone route): step 1/1. Functionally, catalyzes the conversion of dihydroorotate to orotate with quinone as electron acceptor. The sequence is that of Dihydroorotate dehydrogenase (quinone) from Mycolicibacterium smegmatis (strain ATCC 700084 / mc(2)155) (Mycobacterium smegmatis).